The following is a 165-amino-acid chain: 6,7-dimethyl-8-ribityllumazine synthase (165 aa).

Residues phenylalanine 22, serine 56 to glutamate 58, and alanine 80 to isoleucine 82 contribute to the 5-amino-6-(D-ribitylamino)uracil site. (2S)-2-hydroxy-3-oxobutyl phosphate is bound at residue glutamate 85 to threonine 86. Histidine 88 (proton donor) is an active-site residue. Residue phenylalanine 113 coordinates 5-amino-6-(D-ribitylamino)uracil. Residue arginine 127 coordinates (2S)-2-hydroxy-3-oxobutyl phosphate.

Belongs to the DMRL synthase family.

It carries out the reaction (2S)-2-hydroxy-3-oxobutyl phosphate + 5-amino-6-(D-ribitylamino)uracil = 6,7-dimethyl-8-(1-D-ribityl)lumazine + phosphate + 2 H2O + H(+). Its pathway is cofactor biosynthesis; riboflavin biosynthesis; riboflavin from 2-hydroxy-3-oxobutyl phosphate and 5-amino-6-(D-ribitylamino)uracil: step 1/2. Its function is as follows. Catalyzes the formation of 6,7-dimethyl-8-ribityllumazine by condensation of 5-amino-6-(D-ribitylamino)uracil with 3,4-dihydroxy-2-butanone 4-phosphate. This is the penultimate step in the biosynthesis of riboflavin. In Thermotoga petrophila (strain ATCC BAA-488 / DSM 13995 / JCM 10881 / RKU-1), this protein is 6,7-dimethyl-8-ribityllumazine synthase.